The primary structure comprises 217 residues: KS1 protein (217 aa).

Residues 1–16 (MKLIIVLVMMLVCVYS) form the signal peptide. Over residues 24–47 (PKNHEVPAKKQFAETKVEKKKRSD) the composition is skewed to basic and acidic residues. 2 disordered regions span residues 24 to 58 (PKNHEVPAKKQFAETKVEKKKRSDDGDEEICDDDD) and 72 to 205 (EDDD…LKIK). A run of 2 repeats spans residues 32–81 (KKQF…VDGG) and 98–147 (KKKK…YDED). Residues 32–147 (KKQFAETKVE…EEDDDCYDED (116 aa)) form a 2 X 50 AA approximate repeats region. Acidic residues-rich tracts occupy residues 48 to 58 (DGDEEICDDDD) and 72 to 94 (EDDDDCVDGGETEECDEDDDDCQ). The span at 98-110 (KKKKRETKPKLKK) shows a compositional bias: basic residues. Over residues 114-145 (DEEEEECEEDDEDCEVEVDIEECDEEDDDCYD) the composition is skewed to acidic residues. The span at 149-188 (KKKKENKLKKESKKKNSKKTVPKNAKKSSKRSTSTKKTSQ) shows a compositional bias: basic residues.

In terms of tissue distribution, expressed in tentacle-specific epithelial cells (battery cells) as well as in a small fraction of ectodermal epithelial cells in the gastric region subjacent to the tentacles (the tentacle formation region). The later cells are committed to become battery cells.

Responds to early signals of head formation in hydra. The chain is KS1 protein (KS1) from Hydra vulgaris (Hydra).